The primary structure comprises 152 residues: MFRGATLVNLDSKGRLSVPTRYRDQLIENASGQMVCTIDINHPCLLLYTLPEWEIIEQKLSRLSSMNPQERRVQRLLLGHASECQMDNSGRLLIAPVLRQHAGLTKEVMLVGQFNKFELWDETTWYQQVKEDIDAEQSDSGVLSDRLQDLSL.

2 SpoVT-AbrB domains span residues 5–52 (ATLV…TLPE) and 81–124 (ASEC…DETT).

The protein belongs to the MraZ family. In terms of assembly, forms oligomers.

It localises to the cytoplasm. The protein resides in the nucleoid. Functionally, negatively regulates its own expression and that of the subsequent genes in the proximal part of the division and cell wall (dcw) gene cluster. Acts by binding directly to DNA. May also regulate the expression of genes outside the dcw cluster. This Enterobacter sp. (strain 638) protein is Transcriptional regulator MraZ.